A 423-amino-acid polypeptide reads, in one-letter code: Maltooligosaccharide ABC transporter solute-binding lipoprotein (423 aa).

The signal sequence occupies residues 1–24 (MSSKFMKSAAVLGTATLASLLLVA). A lipid anchor (N-palmitoyl cysteine) is attached at Cys25. The S-diacylglycerol cysteine moiety is linked to residue Cys25. Substrate is bound by residues Tyr52, Asp77, Asp83, 103–104 (DR), Glu148, Asp193, Asn196, 251–254 (EGAG), Trp274, and Lys307.

The protein belongs to the bacterial solute-binding protein 1 family.

It is found in the cell membrane. Its function is as follows. Part of an ABC transporter complex involved in the uptake of maltodextrins. Binds glycogen-derived linear maltooligosaccharides increasing in size from maltotriose to maltooctaose with the highest affinity for maltotriose. Has a very weak affinity for maltose. Has also a very low affinity for maltotetraitol, indicating that the binding is selective for maltooligosaccharides with an intact reducing end. The polypeptide is Maltooligosaccharide ABC transporter solute-binding lipoprotein (Streptococcus pneumoniae serotype 4 (strain ATCC BAA-334 / TIGR4)).